The sequence spans 540 residues: GMP synthase [glutamine-hydrolyzing] (540 aa).

The Glutamine amidotransferase type-1 domain occupies 26–216 (IIIILDFGSQ…VYHICECEPT (191 aa)). Cysteine 103 serves as the catalytic Nucleophile. Residues histidine 190 and glutamate 192 contribute to the active site. The GMPS ATP-PPase domain maps to 217 to 415 (WTTAAFVEEA…VGLPEEIVQR (199 aa)). 244–250 (SGGVDSS) is an ATP binding site.

Homodimer.

The catalysed reaction is XMP + L-glutamine + ATP + H2O = GMP + L-glutamate + AMP + diphosphate + 2 H(+). Its pathway is purine metabolism; GMP biosynthesis; GMP from XMP (L-Gln route): step 1/1. Catalyzes the synthesis of GMP from XMP. The protein is GMP synthase [glutamine-hydrolyzing] of Trichormus variabilis (strain ATCC 29413 / PCC 7937) (Anabaena variabilis).